The chain runs to 765 residues: Transcription factor SKN7 (765 aa).

The tract at residues 1-42 is disordered; sequence MPPTNGEGGSQQPQQQQQQQQQQQQQQQQQQQQQQGGSGSSD. Residues 11–35 show a composition bias toward low complexity; sequence QQPQQQQQQQQQQQQQQQQQQQQQQ. The DNA-binding domain stretch occupies residues 40–145; the sequence is SSDFVRKLYK…NLDNIRRKAP (106 aa). Residues 157-198 adopt a coiled-coil conformation; sequence FNASQQQIAALSESLQATQQQLQALQQQCYELEKTNRLLVSE. A hydrophobic repeat HR-A/B region spans residues 160-220; that stretch reads SQQQIAALSE…QASNEIINHL (61 aa). Residues 371 to 391 are disordered; the sequence is SSSQITPSQITPPPKDQMSSM. In terms of domain architecture, Response regulatory spans 398–514; the sequence is RVLLVEDDKT…NMSRLLRRHL (117 aa). 4-aspartylphosphate is present on aspartate 449. The interval 542-765 is transactivation domain; sequence TAGPATTGVG…PGVGVAGFVQ (224 aa). Over residues 550-564 the composition is skewed to gly residues; that stretch reads VGVGVAGAPSGGAHG. Disordered stretches follow at residues 550–647 and 686–765; these read VGVG…PAGL and PGAM…GFVQ. Residues 569-584 show a composition bias toward low complexity; it reads AQHQQGYAMAPPTTMQ. A compositionally biased stretch (pro residues) spans 626-636; that stretch reads QPPPPPTPTQP. 2 stretches are compositionally biased toward low complexity: residues 637–647 and 699–715; these read SPTSAAPPAGL and GVGH…AGAR. Gly residues predominate over residues 755–765; sequence HPGVGVAGFVQ.

This sequence belongs to the SKN7 family. Homotrimer.

It is found in the nucleus. Its function is as follows. Transcription factor that is part of a SLN1-YPD1-SKN7 two-component regulatory system, which controls gene expression in response to changes in the osmolarity of the extracellular environment. Under low osmotic conditions, phosphorylated and activated by the phosphorelay intermediate protein YPD1. Also activated in response to oxidative stress, independent on the two-component regulatory system. Regulates heat shock genes in response to oxidative stress and genes involved in cell wall integrity in response to osmotic changes. This chain is Transcription factor SKN7, found in Chaetomium thermophilum (strain DSM 1495 / CBS 144.50 / IMI 039719) (Thermochaetoides thermophila).